The chain runs to 398 residues: Elongation factor Tu (398 aa).

Positions 10-207 constitute a tr-type G domain; that stretch reads KPHVNIGTIG…TVDEYIPEPE (198 aa). A G1 region spans residues 19 to 26; that stretch reads GHVDHGKT. 19 to 26 contacts GTP; it reads GHVDHGKT. A Mg(2+)-binding site is contributed by T26. The segment at 63-67 is G2; the sequence is GITIN. The interval 84–87 is G3; it reads DAPG. GTP contacts are provided by residues 84–88 and 139–142; these read DAPGH and NKVD. The tract at residues 139 to 142 is G4; the sequence is NKVD. A G5 region spans residues 177–179; the sequence is SAL.

The protein belongs to the TRAFAC class translation factor GTPase superfamily. Classic translation factor GTPase family. EF-Tu/EF-1A subfamily. In terms of assembly, monomer.

It is found in the cytoplasm. It carries out the reaction GTP + H2O = GDP + phosphate + H(+). Functionally, GTP hydrolase that promotes the GTP-dependent binding of aminoacyl-tRNA to the A-site of ribosomes during protein biosynthesis. The chain is Elongation factor Tu from Streptococcus suis (strain 98HAH33).